Reading from the N-terminus, the 536-residue chain is SNW domain-containing protein 1 (536 aa).

Residues 1-44 are disordered; it reads MALTSFLPAPTQLSQDQLEAEERARSQRSLQTSLVSSRREPPPY. Ala-2 bears the N-acetylalanine mark. Phosphoserine is present on Ser-14. Residues 27 to 36 show a composition bias toward polar residues; it reads QRSLQTSLVS. The tract at residues 59–79 is interaction with PPIL1; sequence GDGGAFPEIHVAQYPLDMGRK. Residues Lys-81, Lys-97, Lys-115, Lys-122, Lys-141, Lys-158, and Lys-170 each participate in a glycyl lysine isopeptide (Lys-Gly) (interchain with G-Cter in SUMO2) cross-link. An SNW region spans residues 174 to 339; sequence AQYIRYTPSQ…KARERRAGIK (166 aa). Ser-182 and Ser-190 each carry phosphoserine. A Glycyl lysine isopeptide (Lys-Gly) (interchain with G-Cter in SUMO2) cross-link involves residue Lys-193. Residues 212 to 233 form a disordered region; the sequence is FKINKKIPRGPPSPPAPVMHSP. A phosphoserine mark is found at Ser-224, Ser-232, and Ser-234. Residues Lys-240, Lys-258, Lys-286, Lys-339, Lys-344, Lys-416, and Lys-441 each participate in a glycyl lysine isopeptide (Lys-Gly) (interchain with G-Cter in SUMO2) cross-link. Residues 311 to 386 are disordered; that stretch reads KMAQKEKEKH…RSKLQRNENR (76 aa). Ser-446 carries the phosphoserine modification. A Glycyl lysine isopeptide (Lys-Gly) (interchain with G-Cter in SUMO2) cross-link involves residue Lys-452. Basic and acidic residues-rich tracts occupy residues 467-489 and 503-530; these read IKTN…RGRE and KFLE…EHEG. A disordered region spans residues 467–536; the sequence is IKTNRFVPDK…EHEGKKRRKE (70 aa). Phosphoserine occurs at positions 479 and 481. A Glycyl lysine isopeptide (Lys-Gly) (interchain with G-Cter in SUMO2) cross-link involves residue Lys-509.

The protein belongs to the SNW family. In terms of assembly, identified in the spliceosome C complex. Associates with U4/U6-U5 tri-small nuclear ribonucleoproteins (U4/U6-U5 tri-snRNPs). Component of the minor spliceosome, which splices U12-type introns. Interacts with SKI, SMAD2,SMAD3, RBPJ, RB1, PABPN1, MAGEA1, SIRT1, FOXN3, U2AF2, PPIL1, DAXX and ATP1B4. Interacts with VDR and RXRA; preferentially associates with VDR:RXRA heterodimers. Interacts with NCOR2. Interacts with MAML1. Interacts with NOTCH1 NICD; the interaction involves multimerized NOTCH1 NICD. Forms a complex with NOTCH1 NICD and MAML1; the association is dissociated by RBPJ. Associates with positive transcription elongation factor b (P-TEFb). Component of the SNARP complex which consists at least of SNIP1, SNW1, THRAP3, BCLAF1 and PNN.

It localises to the nucleus. Its function is as follows. Involved in pre-mRNA splicing as component of the spliceosome. As a component of the minor spliceosome, involved in the splicing of U12-type introns in pre-mRNAs. Required in the specific splicing of CDKN1A pre-mRNA; the function probably involves the recruitment of U2AF2 to the mRNA. May recruit PPIL1 to the spliceosome. May be involved in cyclin-D1/CCND1 mRNA stability through the SNARP complex which associates with both the 3'end of the CCND1 gene and its mRNA. Involved in transcriptional regulation. Modulates TGF-beta-mediated transcription via association with SMAD proteins, MYOD1-mediated transcription via association with PABPN1, RB1-mediated transcriptional repression, and retinoid-X receptor (RXR)- and vitamin D receptor (VDR)-dependent gene transcription in a cell line-specific manner probably involving coactivators NCOA1 and GRIP1. Is involved in NOTCH1-mediated transcriptional activation. Binds to multimerized forms of Notch intracellular domain (NICD) and is proposed to recruit transcriptional coactivators such as MAML1 to form an intermediate preactivation complex which associates with DNA-bound CBF-1/RBPJ to form a transcriptional activation complex by releasing SNW1 and redundant NOTCH1 NICD. The chain is SNW domain-containing protein 1 (Snw1) from Mus musculus (Mouse).